The primary structure comprises 355 residues: Isocitrate dehydrogenase [NAD] subunit gamma, mitochondrial (355 aa).

Position 1 (Ile1) is a transit peptide, mitochondrion. 2 residues coordinate citrate: Thr82 and Asn95. Positions 98, 129, and 216 each coordinate substrate. Residue Asp216 coordinates Mn(2+). Positions 274, 275, and 286 each coordinate ADP.

The protein belongs to the isocitrate and isopropylmalate dehydrogenases family. Heterooligomer of subunits alpha (IDH3A), beta (IDH3B), and gamma (IDH3G) in the apparent ratio of 2:1:1. The heterodimer containing one IDH3A and one IDH3B subunit and the heterodimer containing one IDH3A and one IDH3G subunit assemble into a heterotetramer (which contains two subunits of IDH3A, one of IDH3B and one of IDH3G) and further into the heterooctamer. Mg(2+) serves as cofactor. It depends on Mn(2+) as a cofactor.

It localises to the mitochondrion. With respect to regulation, the heterotetramer and the heterodimer composed of IDH3A and IDH3G subunits can be allosterically activated by citrate (CIT) or/and ADP, and the two activators can act independently or synergistically. The heterodimer composed of IDH3A and IDH3B subunits cannot be allosterically regulated and the allosteric regulation of the heterotetramer is through the IDH3G subunit and not the IDH3B subunit. The IDH3G subunit contains the allosteric site which consists of a CIT-binding site and an ADP-binding site, and the binding of CIT and ADP causes conformational changes at the allosteric site which are transmitted to the active site in the catalytic subunit (IDH3A) through a cascade of conformational changes at the heterodimer interface, leading to stabilization of the isocitrate-binding at the active site and thus activation of the enzyme. ATP can activate the heterotetramer and the heterodimer composed of IDH3A and IDH3G subunits at low concentrations but inhibits their activities at high concentrations, whereas ATP exhibits only inhibitory effect on the heterodimer composed of IDH3A and IDH3B subunits. Regulatory subunit which plays a role in the allosteric regulation of the enzyme catalyzing the decarboxylation of isocitrate (ICT) into alpha-ketoglutarate. The heterodimer composed of the alpha (IDH3A) and beta (IDH3B) subunits and the heterodimer composed of the alpha (IDH3A) and gamma (IDH3G) subunits, have considerable basal activity but the full activity of the heterotetramer (containing two subunits of IDH3A, one of IDH3B and one of IDH3G) requires the assembly and cooperative function of both heterodimers. This Macaca fascicularis (Crab-eating macaque) protein is Isocitrate dehydrogenase [NAD] subunit gamma, mitochondrial (IDH3G).